The chain runs to 187 residues: Probable chorismate pyruvate-lyase (187 aa).

Arg-81, Leu-119, and Glu-178 together coordinate substrate.

The protein belongs to the UbiC family.

It localises to the cytoplasm. The catalysed reaction is chorismate = 4-hydroxybenzoate + pyruvate. It participates in cofactor biosynthesis; ubiquinone biosynthesis. Removes the pyruvyl group from chorismate, with concomitant aromatization of the ring, to provide 4-hydroxybenzoate (4HB) for the ubiquinone pathway. This Thiobacillus denitrificans (strain ATCC 25259 / T1) protein is Probable chorismate pyruvate-lyase.